The sequence spans 501 residues: Glutamyl-tRNA(Gln) amidotransferase subunit A (501 aa).

Residues K80 and S155 each act as charge relay system in the active site. The active-site Acyl-ester intermediate is the S179.

The protein belongs to the amidase family. GatA subfamily. As to quaternary structure, heterotrimer of A, B and C subunits.

It catalyses the reaction L-glutamyl-tRNA(Gln) + L-glutamine + ATP + H2O = L-glutaminyl-tRNA(Gln) + L-glutamate + ADP + phosphate + H(+). In terms of biological role, allows the formation of correctly charged Gln-tRNA(Gln) through the transamidation of misacylated Glu-tRNA(Gln) in organisms which lack glutaminyl-tRNA synthetase. The reaction takes place in the presence of glutamine and ATP through an activated gamma-phospho-Glu-tRNA(Gln). In Cupriavidus taiwanensis (strain DSM 17343 / BCRC 17206 / CCUG 44338 / CIP 107171 / LMG 19424 / R1) (Ralstonia taiwanensis (strain LMG 19424)), this protein is Glutamyl-tRNA(Gln) amidotransferase subunit A.